The sequence spans 89 residues: Co-chaperonin GroES (89 aa).

This sequence belongs to the GroES chaperonin family. As to quaternary structure, heptamer of 7 subunits arranged in a ring. Interacts with the chaperonin GroEL.

It localises to the cytoplasm. Together with the chaperonin GroEL, plays an essential role in assisting protein folding. The GroEL-GroES system forms a nano-cage that allows encapsulation of the non-native substrate proteins and provides a physical environment optimized to promote and accelerate protein folding. GroES binds to the apical surface of the GroEL ring, thereby capping the opening of the GroEL channel. This chain is Co-chaperonin GroES, found in Kosmotoga olearia (strain ATCC BAA-1733 / DSM 21960 / TBF 19.5.1).